The chain runs to 104 residues: UPF0213 protein ORF82 (104 aa).

The 77-residue stretch at 7–83 (KVWCVYIVRR…KRKRGKYFKL (77 aa)) folds into the GIY-YIG domain.

The protein belongs to the UPF0213 family.

In Orgyia pseudotsugata (Douglas-fir tussock moth), this protein is UPF0213 protein ORF82.